Here is a 118-residue protein sequence, read N- to C-terminus: UPF0295 protein BT9727_0449 (118 aa).

2 helical membrane passes run 12 to 32 (IRTF…LGVF) and 43 to 63 (FMMV…WIGM).

The protein belongs to the UPF0295 family.

The protein localises to the cell membrane. The sequence is that of UPF0295 protein BT9727_0449 from Bacillus thuringiensis subsp. konkukian (strain 97-27).